The chain runs to 298 residues: 4-hydroxy-tetrahydrodipicolinate synthase (298 aa).

Pyruvate is bound at residue Thr-48. The Proton donor/acceptor role is filled by Tyr-137. Lys-166 acts as the Schiff-base intermediate with substrate in catalysis. Ile-207 provides a ligand contact to pyruvate.

The protein belongs to the DapA family. As to quaternary structure, homotetramer; dimer of dimers.

The protein localises to the cytoplasm. The catalysed reaction is L-aspartate 4-semialdehyde + pyruvate = (2S,4S)-4-hydroxy-2,3,4,5-tetrahydrodipicolinate + H2O + H(+). It participates in amino-acid biosynthesis; L-lysine biosynthesis via DAP pathway; (S)-tetrahydrodipicolinate from L-aspartate: step 3/4. In terms of biological role, catalyzes the condensation of (S)-aspartate-beta-semialdehyde [(S)-ASA] and pyruvate to 4-hydroxy-tetrahydrodipicolinate (HTPA). This chain is 4-hydroxy-tetrahydrodipicolinate synthase, found in Campylobacter jejuni subsp. jejuni serotype O:23/36 (strain 81-176).